Reading from the N-terminus, the 440-residue chain is Adenylosuccinate lyase (440 aa).

Residues 4 to 5 (RY), 67 to 69 (KHD), and 93 to 94 (TS) each bind N(6)-(1,2-dicarboxyethyl)-AMP. Histidine 141 serves as the catalytic Proton donor/acceptor. Glutamine 212 serves as a coordination point for N(6)-(1,2-dicarboxyethyl)-AMP. The active-site Proton donor/acceptor is serine 262. N(6)-(1,2-dicarboxyethyl)-AMP contacts are provided by residues serine 263, 268–270 (KRN), asparagine 276, and 307–311 (SVERF).

It belongs to the lyase 1 family. Adenylosuccinate lyase subfamily. As to quaternary structure, homotetramer. Residues from neighboring subunits contribute catalytic and substrate-binding residues to each active site.

The enzyme catalyses N(6)-(1,2-dicarboxyethyl)-AMP = fumarate + AMP. It carries out the reaction (2S)-2-[5-amino-1-(5-phospho-beta-D-ribosyl)imidazole-4-carboxamido]succinate = 5-amino-1-(5-phospho-beta-D-ribosyl)imidazole-4-carboxamide + fumarate. Its pathway is purine metabolism; AMP biosynthesis via de novo pathway; AMP from IMP: step 2/2. The protein operates within purine metabolism; IMP biosynthesis via de novo pathway; 5-amino-1-(5-phospho-D-ribosyl)imidazole-4-carboxamide from 5-amino-1-(5-phospho-D-ribosyl)imidazole-4-carboxylate: step 2/2. In terms of biological role, catalyzes two reactions in de novo purine nucleotide biosynthesis. Catalyzes the breakdown of 5-aminoimidazole- (N-succinylocarboxamide) ribotide (SAICAR or 2-[5-amino-1-(5-phospho-beta-D-ribosyl)imidazole-4-carboxamido]succinate) to 5-aminoimidazole-4-carboxamide ribotide (AICAR or 5-amino-1-(5-phospho-beta-D-ribosyl)imidazole-4-carboxamide) and fumarate, and of adenylosuccinate (ADS or N(6)-(1,2-dicarboxyethyl)-AMP) to adenosine monophosphate (AMP) and fumarate. The chain is Adenylosuccinate lyase (purB) from Helicobacter pylori (strain ATCC 700392 / 26695) (Campylobacter pylori).